The primary structure comprises 285 residues: Inhibitor of growth protein 5 (285 aa).

Residues 116–225 (EKASSTRAKS…ATHPSDVMDM (110 aa)) are disordered. Over residues 131-149 (KKGRKKTKDSKTTGKKKKS) the composition is skewed to basic residues. The segment covering 160 to 178 (NNQSNANSSVNSSSNAGQG) has biased composition (low complexity). The segment at 232–281 (PTYCLCHQVSYGEMIGCDNPDCPIEWFHFACVGLTTKPKGKWFCPKCTQD) adopts a PHD-type zinc-finger fold. Zn(2+) is bound by residues cysteine 235, cysteine 237, cysteine 248, cysteine 253, histidine 259, cysteine 262, cysteine 275, and cysteine 278.

The protein belongs to the ING family. As to quaternary structure, component of the Enok complex composed of at least Br140, enok, Eaf6 and Ing5.

Its subcellular location is the nucleus. It localises to the chromosome. Component of the Enok complex which has a histone H3 acetyltransferase activity. The sequence is that of Inhibitor of growth protein 5 from Drosophila melanogaster (Fruit fly).